We begin with the raw amino-acid sequence, 508 residues long: Putative adenosylhomocysteinase 3 (508 aa).

Residue serine 4 is modified to Phosphoserine. Residues 24-81 (DQKQEFNKRPTKIGRRSLSRSISQSSTDSYSSAASYTDSSDDETSPRDKQQKNSKGSS) are disordered. Residues 32-41 (RPTKIGRRSL) are compositionally biased toward basic residues. Over residues 42–61 (SRSISQSSTDSYSSAASYTD) the composition is skewed to low complexity. Serine 46, serine 49, serine 52, and serine 55 each carry phosphoserine. 3 residues coordinate substrate: threonine 133, aspartate 207, and glutamate 232. 233 to 235 (SVT) provides a ligand contact to NAD(+). Substrate contacts are provided by lysine 262 and aspartate 266. NAD(+) contacts are provided by residues asparagine 267, 298-303 (GEVGKG), glutamate 319, asparagine 354, 375-377 (IGH), and asparagine 422.

Belongs to the adenosylhomocysteinase family. Homotetramer. Forms heteromultimers with AHCYL1 (via the C-terminal region). Interacts with ITPR1; with lower affinity than AHCYL1 and maybe via ITPR1. Interacts with SLC4A4. Interacts with ZCCHC4. NAD(+) is required as a cofactor.

It localises to the cytoplasm. It is found in the microsome. It carries out the reaction S-adenosyl-L-homocysteine + H2O = L-homocysteine + adenosine. It participates in amino-acid biosynthesis; L-homocysteine biosynthesis; L-homocysteine from S-adenosyl-L-homocysteine: step 1/1. Functionally, may regulate the electrogenic sodium/bicarbonate cotransporter SLC4A4 activity and Mg(2+)-sensitivity. On the contrary of its homolog AHCYL1, does not regulate ITPR1 sensitivity to inositol 1,4,5-trisphosphate. The polypeptide is Putative adenosylhomocysteinase 3 (AHCYL2) (Pongo abelii (Sumatran orangutan)).